A 108-amino-acid polypeptide reads, in one-letter code: Large ribosomal subunit protein bL31B (108 aa).

Residues 85–108 (PKPETSVEEVLPKGKKKAPAKKKK) are disordered. Basic residues predominate over residues 97-108 (KGKKKAPAKKKK).

The protein belongs to the bacterial ribosomal protein bL31 family. Type B subfamily. As to quaternary structure, part of the 50S ribosomal subunit.

This Chlamydia muridarum (strain MoPn / Nigg) protein is Large ribosomal subunit protein bL31B.